We begin with the raw amino-acid sequence, 132 residues long: Small ribosomal subunit protein eS6 (132 aa).

This sequence belongs to the eukaryotic ribosomal protein eS6 family.

In Methanosphaerula palustris (strain ATCC BAA-1556 / DSM 19958 / E1-9c), this protein is Small ribosomal subunit protein eS6.